The primary structure comprises 467 residues: Prenyltransferase GME11375 (467 aa).

Glu93 serves as a coordination point for L-tryptophan. Positions 108, 196, 198, 266, 268, and 436 each coordinate dimethylallyl diphosphate.

The protein belongs to the tryptophan dimethylallyltransferase family.

It functions in the pathway secondary metabolite biosynthesis. Its function is as follows. Prenyltransferase; part of the gene cluster that mediates the biosynthesis of dibenzodioxocinones such as pestalotiollide B, a novel class of inhibitors against cholesterol ester transfer protein (CEPT). The biosynthesis initiates from condensation of acetate and malonate units catalyzed by the non-reducing PKS pks8/GME11356. Pks8/GME11356 lacks a thioesterase (TE) domain, which is important to the cyclizing of the third ring of atrochrysone carboxylic acid, and the esterase GME11355 might play the role of TE and catalyzes the cyclization reaction of the C ring. The lactamase-like protein GME11357 (or other beta-lactamases in Pestalotiopsis microspora) probably hydrolyzes the thioester bond between the ACP of pks8/GME11356 and the intermediate to release atrochrysone carboxylic acid, which is spontaneously dehydrates to form endocrocin anthrone. Endocrocin anthrone is further converted to emodin via the endocrocin intermediate. Emodin is then oxidized by several enzymes such as the Baeyer-Villiger oxidase GME11358, the oxidoreductase GME11367, the short chain dehydrogenase/reductase GME11373, as well as by other oxidoreductases from the cluster, to modify the A and C rings and open the B ring, and finally yield monodictyphenone. The prenyltransferase GME11375 may catalyze the addition reaction between the C5 side chains and the carbon bone of dibenzodioxocinones. The remaining biochemical reactions to the final product dibenzodioxocinones should be methylation catalyzed by methyltransferase GME11366 and reduction and lactonization reaction catalyzed by a series of oxidordeuctases. This is Prenyltransferase GME11375 from Pestalotiopsis microspora.